The sequence spans 214 residues: Ribosomal RNA small subunit methyltransferase G (214 aa).

S-adenosyl-L-methionine-binding positions include Gly-72, Phe-77, 125–126 (VE), and Arg-141.

This sequence belongs to the methyltransferase superfamily. RNA methyltransferase RsmG family.

The protein resides in the cytoplasm. It carries out the reaction guanosine(527) in 16S rRNA + S-adenosyl-L-methionine = N(7)-methylguanosine(527) in 16S rRNA + S-adenosyl-L-homocysteine. In terms of biological role, specifically methylates the N7 position of guanine in position 527 of 16S rRNA. This Sinorhizobium fredii (strain NBRC 101917 / NGR234) protein is Ribosomal RNA small subunit methyltransferase G.